Here is a 152-residue protein sequence, read N- to C-terminus: Large ribosomal subunit protein bL9 (152 aa).

This sequence belongs to the bacterial ribosomal protein bL9 family.

Binds to the 23S rRNA. This chain is Large ribosomal subunit protein bL9, found in Pelagibacter ubique (strain HTCC1062).